The primary structure comprises 253 residues: 5'-nucleotidase SurE (253 aa).

4 residues coordinate a divalent metal cation: Asp-8, Asp-9, Ser-39, and Asn-95.

It belongs to the SurE nucleotidase family. The cofactor is a divalent metal cation.

It is found in the cytoplasm. It catalyses the reaction a ribonucleoside 5'-phosphate + H2O = a ribonucleoside + phosphate. Functionally, nucleotidase that shows phosphatase activity on nucleoside 5'-monophosphates. In Desulfatibacillum aliphaticivorans, this protein is 5'-nucleotidase SurE.